We begin with the raw amino-acid sequence, 501 residues long: Dynein regulatory complex subunit 5 (501 aa).

A compositionally biased stretch (polar residues) spans 1-23 (MQETVTTSALLDPSHSSVSTQDK). Disordered stretches follow at residues 1 to 56 (MQET…HPGA) and 203 to 222 (PAQLRPGDQSDSGSEGEMEE). Over residues 24–34 (SSTGGHTSSTG) the composition is skewed to low complexity. Residues 35–49 (PQPSKPSITPVSAKS) show a composition bias toward polar residues. LRR repeat units lie at residues 308–321 (VLEELDLSHNLIGD), 335–355 (RLRVLNLANNQVRAPGAQSLA), 363–383 (NLISLNLRLNCIEDEGGQALA), 391–411 (CLTTLHLGGNELSEPTATLLS), and 419–439 (TLTSINLSCNHIGLDGGKQLL).

The protein belongs to the DRC5 family. Component of the nexin-dynein regulatory complex (N-DRC). Interacts with DRC1. Interacts with FBXL13/DRC6, DRC3 and DRC7.

It is found in the cell projection. It localises to the cilium. The protein resides in the flagellum. Its subcellular location is the cytoplasm. The protein localises to the cytoskeleton. It is found in the flagellum axoneme. Its function is as follows. Component of the nexin-dynein regulatory complex (N-DRC) a key regulator of ciliary/flagellar motility which maintains the alignment and integrity of the distal axoneme and regulates microtubule sliding in motile axonemes. May play a role in the assembly of N-DRC. May be required for sperm motility. This is Dynein regulatory complex subunit 5 (TCTE1) from Macaca fascicularis (Crab-eating macaque).